Consider the following 500-residue polypeptide: ADP,ATP carrier protein 5 (500 aa).

11 consecutive transmembrane segments (helical) span residues 26–46, 62–82, 94–114, 149–169, 184–204, 224–244, 287–307, 328–348, 357–377, 381–401, and 469–489; these read LGKFIPISALMFCILFNQNIL, IAGFAKVYCVTPVAALFVIIY, IFYYLSAFFISCFILFAFVIY, YIVYYSLAELWPNIFYVLLFW, FYTLFSLFGNSSLILVGFLMM, ITLVQVSTTIIAIVAIICCLL, LWLLLICSAAFGFAINLVEAV, LYILWTGVAIIVMTIIGNNVM, AVISPVIIMVTGVLFFGLIVF, ILSLFDGAILMSPLALAVSIG, and SISPILMVVFTFVCFAWIYAV.

Belongs to the ADP/ATP translocase tlc family.

Its subcellular location is the cell membrane. Provides the rickettsial cell with host ATP in exchange for rickettsial ADP. This is an obligate exchange system. This energy acquiring activity is an important component of rickettsial parasitism. The polypeptide is ADP,ATP carrier protein 5 (tlcE) (Rickettsia prowazekii (strain Madrid E)).